A 115-amino-acid polypeptide reads, in one-letter code: MNMILTLFINITLSLCLISIAFWLPQLNAYTEKASPYECGFDPMSSARLPFSMKFFLVGITFLLFDLEIALLLPLPWAIHSTNSYLTMTVSFMLVSALALGLAYEWLNKGLEWTE.

Helical transmembrane passes span 4–24 (ILTL…AFWL), 55–75 (FFLV…LLPL), and 84–104 (SYLT…GLAY).

This sequence belongs to the complex I subunit 3 family. Core subunit of respiratory chain NADH dehydrogenase (Complex I) which is composed of 45 different subunits. Interacts with TMEM186. Interacts with TMEM242.

It is found in the mitochondrion inner membrane. It carries out the reaction a ubiquinone + NADH + 5 H(+)(in) = a ubiquinol + NAD(+) + 4 H(+)(out). Core subunit of the mitochondrial membrane respiratory chain NADH dehydrogenase (Complex I) which catalyzes electron transfer from NADH through the respiratory chain, using ubiquinone as an electron acceptor. Essential for the catalytic activity of complex I. This is NADH-ubiquinone oxidoreductase chain 3 from Necromys lactens (Rufous-bellied bolo mouse).